Here is a 180-residue protein sequence, read N- to C-terminus: Large ribosomal subunit protein uL5 (180 aa).

Belongs to the universal ribosomal protein uL5 family. In terms of assembly, part of the 50S ribosomal subunit; part of the 5S rRNA/L5/L18/L25 subcomplex. Contacts the 5S rRNA and the P site tRNA. Forms a bridge to the 30S subunit in the 70S ribosome.

This is one of the proteins that bind and probably mediate the attachment of the 5S RNA into the large ribosomal subunit, where it forms part of the central protuberance. In the 70S ribosome it contacts protein S13 of the 30S subunit (bridge B1b), connecting the 2 subunits; this bridge is implicated in subunit movement. Contacts the P site tRNA; the 5S rRNA and some of its associated proteins might help stabilize positioning of ribosome-bound tRNAs. This Lactiplantibacillus plantarum (strain ATCC BAA-793 / NCIMB 8826 / WCFS1) (Lactobacillus plantarum) protein is Large ribosomal subunit protein uL5.